An 80-amino-acid chain; its full sequence is Small ribosomal subunit protein bS16 (80 aa).

Belongs to the bacterial ribosomal protein bS16 family.

This is Small ribosomal subunit protein bS16 from Laribacter hongkongensis (strain HLHK9).